Here is a 216-residue protein sequence, read N- to C-terminus: Redox-sensing transcriptional repressor Rex (216 aa).

The segment at residues 17-56 is a DNA-binding region (H-T-H motif); it reads IYFRYLTFLHDAGTDRISSAELSDAIKFDAATIRRDFSYF. 91-96 contacts NAD(+); it reads GAGNLG.

The protein belongs to the transcriptional regulatory Rex family. In terms of assembly, homodimer.

The protein resides in the cytoplasm. Functionally, modulates transcription in response to changes in cellular NADH/NAD(+) redox state. This Leuconostoc citreum (strain KM20) protein is Redox-sensing transcriptional repressor Rex.